Consider the following 750-residue polypeptide: Photosystem I P700 chlorophyll a apoprotein A1 (750 aa).

8 consecutive transmembrane segments (helical) span residues 70-93 (VFSA…FHGA), 156-179 (LYCT…FHYH), 195-219 (LNHH…HVSL), 291-309 (IAHH…GHMY), 346-369 (WHAQ…HHMY), 385-411 (LSLF…IFMV), 433-455 (AIIS…LYIH), and 531-549 (FLVH…LILL). [4Fe-4S] cluster-binding residues include Cys573 and Cys582. 2 helical membrane-spanning segments follow: residues 589–610 (HVFL…HFSW) and 664–686 (LSAY…MFLF). Position 675 (His675) interacts with chlorophyll a'. The chlorophyll a site is built by Met683 and Tyr691. Trp692 is a binding site for phylloquinone. Residues 724-744 (AVGVTHYLLGGIATTWAFFLA) traverse the membrane as a helical segment.

It belongs to the PsaA/PsaB family. In terms of assembly, the PsaA/B heterodimer binds the P700 chlorophyll special pair and subsequent electron acceptors. PSI consists of a core antenna complex that captures photons, and an electron transfer chain that converts photonic excitation into a charge separation. The eukaryotic PSI reaction center is composed of at least 11 subunits. It depends on P700 is a chlorophyll a/chlorophyll a' dimer, A0 is one or more chlorophyll a, A1 is one or both phylloquinones and FX is a shared 4Fe-4S iron-sulfur center. as a cofactor.

The protein resides in the plastid. Its subcellular location is the chloroplast thylakoid membrane. The catalysed reaction is reduced [plastocyanin] + hnu + oxidized [2Fe-2S]-[ferredoxin] = oxidized [plastocyanin] + reduced [2Fe-2S]-[ferredoxin]. Its function is as follows. PsaA and PsaB bind P700, the primary electron donor of photosystem I (PSI), as well as the electron acceptors A0, A1 and FX. PSI is a plastocyanin-ferredoxin oxidoreductase, converting photonic excitation into a charge separation, which transfers an electron from the donor P700 chlorophyll pair to the spectroscopically characterized acceptors A0, A1, FX, FA and FB in turn. Oxidized P700 is reduced on the lumenal side of the thylakoid membrane by plastocyanin. The chain is Photosystem I P700 chlorophyll a apoprotein A1 from Jasminum nudiflorum (Winter jasmine).